Reading from the N-terminus, the 683-residue chain is U4/U6 small nuclear ribonucleoprotein Prp3 (683 aa).

In terms of domain architecture, PWI spans Met1–Arg87. Residues Gly73 to Gly107 show a composition bias toward basic and acidic residues. The disordered stretch occupies residues Gly73 to Gly135. A Glycyl lysine isopeptide (Lys-Gly) (interchain with G-Cter in SUMO2) cross-link involves residue Lys139. Residues Ile153–Ile183 form a disordered region. Ser164 carries the post-translational modification Phosphoserine. The residue at position 167 (Thr167) is a Phosphothreonine. Residues Lys244 and Lys252 each participate in a glycyl lysine isopeptide (Lys-Gly) (interchain with G-Cter in SUMO2) cross-link. The segment at Asn416–Asn550 is mediates interaction with SART3. Ser619 carries the post-translational modification Phosphoserine.

In terms of assembly, component of the precatalytic spliceosome (spliceosome B complex). Component of the U4/U6-U5 tri-snRNP complex, a building block of the precatalytic spliceosome (spliceosome B complex). The U4/U6-U5 tri-snRNP complex is composed of the U4, U6 and U5 snRNAs and at least PRPF3, PRPF4, PRPF6, PRPF8, PRPF31, SNRNP200, TXNL4A, SNRNP40, SNRPB, SNRPD1, SNRPD2, SNRPD3, SNRPE, SNRPF, SNRPG, DDX23, CD2BP2, PPIH, SNU13, EFTUD2, SART1 and USP39, plus LSM2, LSM3, LSM4, LSM5, LSM6, LSM7 and LSM8. Interacts directly with PRPF4. Part of a heteromeric complex containing PPIH, PRPF3 and PRPF4 that is stable in the absence of RNA. Interacts with SART3; the interaction is direct and recruits the deubiquitinase USP4 to PRPF3. Interacts with PRPF19. Interacts ('Lys-63'-linked polyubiquitinated) with PRPF8 (via the MPN (JAB/Mov34) domain); may stabilize the U4/U6-U5 tri-snRNP complex. Interacts with ERCC6. Ubiquitinated. Undergoes 'Lys-63'-linked polyubiquitination by PRPF19 and deubiquitination by USP4. 'Lys-63'-linked ubiquitination increases the affinity for PRPF8 and may regulate the assembly of the U4/U6-U5 tri-snRNP complex.

It localises to the nucleus. The protein resides in the nucleus speckle. Functionally, plays a role in pre-mRNA splicing as component of the U4/U6-U5 tri-snRNP complex that is involved in spliceosome assembly, and as component of the precatalytic spliceosome (spliceosome B complex). This is U4/U6 small nuclear ribonucleoprotein Prp3 (PRPF3) from Bos taurus (Bovine).